Reading from the N-terminus, the 539-residue chain is Hydroxylamine reductase (539 aa).

Positions 3, 6, 13, and 19 each coordinate [4Fe-4S] cluster. Residues His-240, Glu-264, Cys-308, Cys-395, Cys-423, Cys-448, Glu-482, and Lys-484 each coordinate hybrid [4Fe-2O-2S] cluster. Cys-395 is subject to Cysteine persulfide.

It belongs to the HCP family. The cofactor is [4Fe-4S] cluster. Requires hybrid [4Fe-2O-2S] cluster as cofactor.

The protein resides in the cytoplasm. The enzyme catalyses A + NH4(+) + H2O = hydroxylamine + AH2 + H(+). Its function is as follows. Catalyzes the reduction of hydroxylamine to form NH(3) and H(2)O. This Thermodesulfovibrio yellowstonii (strain ATCC 51303 / DSM 11347 / YP87) protein is Hydroxylamine reductase.